The primary structure comprises 92 residues: UPF0223 protein SZO_10560 (92 aa).

Belongs to the UPF0223 family.

This is UPF0223 protein SZO_10560 from Streptococcus equi subsp. zooepidemicus (strain H70).